We begin with the raw amino-acid sequence, 145 residues long: Large ribosomal subunit protein uL15 (145 aa).

The segment at 1-50 (MRLNTLSPAAGSKPEKQRRGRGIGSGLGKTGGRGVKGQTSRSGGGKVRAG) is disordered. Residues 22 to 35 (GIGSGLGKTGGRGV) show a composition bias toward gly residues.

This sequence belongs to the universal ribosomal protein uL15 family. As to quaternary structure, part of the 50S ribosomal subunit.

Its function is as follows. Binds to the 23S rRNA. The protein is Large ribosomal subunit protein uL15 of Aeromonas salmonicida (strain A449).